Reading from the N-terminus, the 85-residue chain is Alpha-defensin 14 (85 aa).

An N-terminal signal peptide occupies residues 1-11 (ALVLLAFQVQA). Residues 12–50 (DPIQNTDEETKTEEQPGEDDQAVSVSFGDPEGSSLQEES) constitute a propeptide that is removed on maturation. Residues 13-48 (PIQNTDEETKTEEQPGEDDQAVSVSFGDPEGSSLQE) are disordered. Cystine bridges form between cysteine 56–cysteine 84, cysteine 58–cysteine 73, and cysteine 63–cysteine 83.

The protein belongs to the alpha-defensin family. As to expression, paneth cells of the small bowel.

Its subcellular location is the secreted. In terms of biological role, probably contributes to the antimicrobial barrier function of the small bowel mucosa. The protein is Alpha-defensin 14 (Defa14) of Mus musculus (Mouse).